Reading from the N-terminus, the 112-residue chain is MKKIEAIIKPFKLDEVKEALQEAGLQGITVTEAKGFGRQKGHTELYRGAEYVVDFLPKVKIEVVLGDDAVEGAIEAIRKAAQTGRIGDGKIFVSNIEEVVRIRTGETGMDAV.

Tyr51 is subject to O-UMP-tyrosine.

It belongs to the P(II) protein family. Homotrimer.

In terms of biological role, in nitrogen-limiting conditions, when the ratio of Gln to 2-ketoglutarate decreases, P-II is uridylylated to P-II-UMP. P-II-UMP allows the deadenylation of glutamine synthetase (GS), thus activating the enzyme. Conversely, in nitrogen excess P-II is deuridylated and promotes the adenylation of GS. P-II indirectly controls the transcription of the GS gene (glnA). P-II prevents NR-II-catalyzed conversion of NR-I to NR-I-phosphate, the transcriptional activator of glnA. When P-II is uridylylated to P-II-UMP, these events are reversed. The sequence is that of Nitrogen regulatory protein P-II (glnB) from Mesorhizobium japonicum (strain LMG 29417 / CECT 9101 / MAFF 303099) (Mesorhizobium loti (strain MAFF 303099)).